Reading from the N-terminus, the 226-residue chain is MPTTQKTLMFLSGFLTSLGSVVVICSILATQAWITSRIFFTDAISNGTIVITYGLFRGTSAQELNEGLQDLDKNFEVLGILDNSSQKSLHLVVILLLILSLAASVLSSVFTFYNSISNPYQTFLGPMGVYTWNGLSASFVFLAMVLFVGNAESNHLSDKLSQKLYPDTTNKRTTHTYGYSFWLTLHVIFLNIVTAVIIIFYQKARYRQKQEQRKPVEYAPRDGILF.

A helical membrane pass occupies residues 8–28 (LMFLSGFLTSLGSVVVICSIL). Asn46 carries N-linked (GlcNAc...) asparagine glycosylation. The next 3 helical transmembrane spans lie at 92–112 (VVIL…VFTF), 128–148 (GVYT…VLFV), and 181–201 (FWLT…IIFY).

Belongs to the clarin family.

It localises to the membrane. This is Clarin-3 (Clrn3) from Mus musculus (Mouse).